Here is a 2068-residue protein sequence, read N- to C-terminus: uncharacterized protein (2068 aa).

Transmembrane regions (helical) follow at residues 3 to 23 (FFII…NFCS) and 51 to 71 (TIYL…YYYI). The segment covering 975-998 (QMHSGEDEKEELGEPKEKGSKSCQ) has biased composition (basic and acidic residues). A disordered region spans residues 975–1030 (QMHSGEDEKEELGEPKEKGSKSCQEEEEQDEEEEDEDEEEEEDQGVNNYDNYVDGV). Positions 999 to 1018 (EEEEQDEEEEDEDEEEEEDQ) are enriched in acidic residues. A helical transmembrane segment spans residues 1890–1910 (FLYNLSFIYNVYNYLILIYIY).

It localises to the membrane. This is an uncharacterized protein from Plasmodium falciparum (isolate 3D7).